A 425-amino-acid polypeptide reads, in one-letter code: UPF0597 protein VIBHAR_03081 (425 aa).

This sequence belongs to the UPF0597 family.

The sequence is that of UPF0597 protein VIBHAR_03081 from Vibrio campbellii (strain ATCC BAA-1116).